A 177-amino-acid chain; its full sequence is Matrix protein (177 aa).

Homomultimer. Interacts with nucleoprotein and with the cytoplasmic domain of glycoprotein.

The protein localises to the virion membrane. The protein resides in the host endomembrane system. Its function is as follows. Plays a major role in assembly and budding of virion. Completely covers the ribonucleoprotein coil and keep it in condensed bullet-shaped form. Inhibits viral transcription and stimulates replication. This Lettuce necrotic yellows virus (isolate 318) (LNYV) protein is Matrix protein (M).